Consider the following 360-residue polypeptide: Photosystem II protein D1 (360 aa).

A run of 3 helical transmembrane segments spans residues 29 to 46 (YIGW…TATS), 118 to 133 (HFLL…EWEL), and 142 to 156 (WIFV…AASA). His118 serves as a coordination point for chlorophyll a. Tyr126 provides a ligand contact to pheophytin a. [CaMn4O5] cluster is bound by residues Asp170 and Glu189. Residues 197–218 (FHMAGVAGVFGGSLFSAMHGSL) form a helical membrane-spanning segment. Position 198 (His198) interacts with chlorophyll a. A quinone is bound by residues His215 and 264–265 (SF). His215 is a binding site for Fe cation. His272 is a Fe cation binding site. Residues 274 to 288 (FLALWPVLGIWLTAM) traverse the membrane as a helical segment. Residues His332, Glu333, Asp342, and Ala344 each coordinate [CaMn4O5] cluster. The propeptide occupies 345 to 360 (SGDVLPVAFTAPAVNA).

It belongs to the reaction center PufL/M/PsbA/D family. PSII is composed of 1 copy each of membrane proteins PsbA, PsbB, PsbC, PsbD, PsbE, PsbF, PsbH, PsbI, PsbJ, PsbK, PsbL, PsbM, PsbT, PsbX, PsbY, PsbZ, Psb30/Ycf12, at least 3 peripheral proteins of the oxygen-evolving complex and a large number of cofactors. It forms dimeric complexes. The cofactor is The D1/D2 heterodimer binds P680, chlorophylls that are the primary electron donor of PSII, and subsequent electron acceptors. It shares a non-heme iron and each subunit binds pheophytin, quinone, additional chlorophylls, carotenoids and lipids. D1 provides most of the ligands for the Mn4-Ca-O5 cluster of the oxygen-evolving complex (OEC). There is also a Cl(-1) ion associated with D1 and D2, which is required for oxygen evolution. The PSII complex binds additional chlorophylls, carotenoids and specific lipids.. Tyr-161 forms a radical intermediate that is referred to as redox-active TyrZ, YZ or Y-Z. In terms of processing, C-terminally processed by CTPA; processing is essential to allow assembly of the oxygen-evolving complex and thus photosynthetic growth.

It is found in the plastid. It localises to the chloroplast thylakoid membrane. The enzyme catalyses 2 a plastoquinone + 4 hnu + 2 H2O = 2 a plastoquinol + O2. Photosystem II (PSII) is a light-driven water:plastoquinone oxidoreductase that uses light energy to abstract electrons from H(2)O, generating O(2) and a proton gradient subsequently used for ATP formation. It consists of a core antenna complex that captures photons, and an electron transfer chain that converts photonic excitation into a charge separation. The D1/D2 (PsbA/PsbD) reaction center heterodimer binds P680, the primary electron donor of PSII as well as several subsequent electron acceptors. The chain is Photosystem II protein D1 from Thalassiosira pseudonana (Marine diatom).